The chain runs to 604 residues: Aspartate--tRNA(Asp/Asn) ligase (604 aa).

Residue Glu169 coordinates L-aspartate. Residues 193–196 are aspartate; that stretch reads QLFK. L-aspartate is bound at residue Arg215. ATP contacts are provided by residues 215–217 and Gln224; that span reads RDE. Position 456 (His456) interacts with L-aspartate. Glu490 provides a ligand contact to ATP. Arg497 provides a ligand contact to L-aspartate. 542–545 contacts ATP; sequence GWDR. The segment at 571-604 is disordered; sequence PLTGAPAPITAQQRKEAGVDAQPEPKQAEAEPEA.

This sequence belongs to the class-II aminoacyl-tRNA synthetase family. Type 1 subfamily. In terms of assembly, homodimer.

It localises to the cytoplasm. The enzyme catalyses tRNA(Asx) + L-aspartate + ATP = L-aspartyl-tRNA(Asx) + AMP + diphosphate. Its function is as follows. Aspartyl-tRNA synthetase with relaxed tRNA specificity since it is able to aspartylate not only its cognate tRNA(Asp) but also tRNA(Asn). Reaction proceeds in two steps: L-aspartate is first activated by ATP to form Asp-AMP and then transferred to the acceptor end of tRNA(Asp/Asn). In Micrococcus luteus (strain ATCC 4698 / DSM 20030 / JCM 1464 / CCM 169 / CCUG 5858 / IAM 1056 / NBRC 3333 / NCIMB 9278 / NCTC 2665 / VKM Ac-2230) (Micrococcus lysodeikticus), this protein is Aspartate--tRNA(Asp/Asn) ligase.